We begin with the raw amino-acid sequence, 308 residues long: HPr kinase/phosphorylase (308 aa).

Catalysis depends on residues His-138 and Lys-159. An ATP-binding site is contributed by Gly-153 to Ser-160. Residue Ser-160 participates in Mg(2+) binding. Asp-177 functions as the Proton acceptor; for phosphorylation activity. Proton donor; for dephosphorylation activity in the catalytic mechanism. The segment at Leu-201–Asp-210 is important for the catalytic mechanism of both phosphorylation and dephosphorylation. Residue Glu-202 coordinates Mg(2+). The active site involves Arg-243. An important for the catalytic mechanism of dephosphorylation region spans residues Gln-264–Arg-269.

Belongs to the HPrK/P family. Homohexamer. Requires Mg(2+) as cofactor.

It carries out the reaction [HPr protein]-L-serine + ATP = [HPr protein]-O-phospho-L-serine + ADP + H(+). It catalyses the reaction [HPr protein]-O-phospho-L-serine + phosphate + H(+) = [HPr protein]-L-serine + diphosphate. Catalyzes the ATP- as well as the pyrophosphate-dependent phosphorylation of a specific serine residue in HPr, a phosphocarrier protein of the phosphoenolpyruvate-dependent sugar phosphotransferase system (PTS). HprK/P also catalyzes the pyrophosphate-producing, inorganic phosphate-dependent dephosphorylation (phosphorolysis) of seryl-phosphorylated HPr (P-Ser-HPr). The polypeptide is HPr kinase/phosphorylase (Bordetella bronchiseptica (strain ATCC BAA-588 / NCTC 13252 / RB50) (Alcaligenes bronchisepticus)).